Reading from the N-terminus, the 339-residue chain is Major pollen allergen Lol p 5b (339 aa).

An N-terminal signal peptide occupies residues 1-25; sequence MAVQKHTVALFLAVALVAGPAASYA. A run of 9 repeats spans residues 32–34, 35–37, 38–40, 41–43, 44–46, 47–49, 50–52, 53–55, and 56–58. A 9 X 3 AA tandem repeats of [PA]-A-[TA] region spans residues 32 to 58; it reads PATPATPAAPATAATPATPATPATPAA. Positions 36–58 are enriched in low complexity; sequence ATPAAPATAATPATPATPATPAA. Positions 36 to 65 are disordered; sequence ATPAAPATAATPATPATPATPAAVPSGKAT. A 2-1; truncated repeat occupies 285–290; that stretch reads ATPAAA. The tract at residues 285–334 is 6 X 9 AA approximate tandem repeats of T-A-T-A-T-P-A-A-A; that stretch reads ATPAAAATATPTPAAATATATPAAAYATATPAAATATATPAAATATPAAA. 4 repeat units span residues 292–300, 301–309, 310–318, and 319–327. The stretch at 328 to 334 is one 2-6; truncated repeat; the sequence is TATPAAA.

This sequence belongs to the Poa p IX/Phl p VI allergen family. As to expression, pollen, starch granules.

The chain is Major pollen allergen Lol p 5b from Lolium perenne (Perennial ryegrass).